The chain runs to 309 residues: L-aminoadipate-semialdehyde dehydrogenase-phosphopantetheinyl transferase (309 aa).

CoA is bound by residues Arg47, 86-91, and 108-111; these read RTAKGK and NISH. Asp129 and Glu181 together coordinate Mg(2+). Residue 181-185 coordinates CoA; sequence ESFIK. Ser258 carries the phosphoserine modification.

This sequence belongs to the P-Pant transferase superfamily. AcpS family. Monomer. It depends on Mg(2+) as a cofactor. As to expression, detected in heart, skeletal muscle, placenta, testis, brain, pancreas, liver and kidney.

The protein resides in the cytoplasm. It is found in the cytosol. It carries out the reaction apo-[ACP] + CoA = holo-[ACP] + adenosine 3',5'-bisphosphate + H(+). The enzyme catalyses apo-[ACP] + acetyl-CoA = acetyl-[ACP] + adenosine 3',5'-bisphosphate + H(+). Functionally, catalyzes the post-translational modification of target proteins by phosphopantetheine. Can transfer the 4'-phosphopantetheine moiety from coenzyme A, regardless of whether the CoA is presented in the free thiol form or as an acetyl thioester, to a serine residue of a broad range of acceptors including the acyl carrier domain of FASN. This Homo sapiens (Human) protein is L-aminoadipate-semialdehyde dehydrogenase-phosphopantetheinyl transferase (AASDHPPT).